A 606-amino-acid polypeptide reads, in one-letter code: Homeobox protein B-H1 (606 aa).

The segment covering 1–14 has biased composition (polar residues); that stretch reads MKDSMSILTQTPSE. 4 disordered regions span residues 1 to 65, 104 to 188, 261 to 340, and 508 to 606; these read MKDS…PAVA, YKQQ…HPHA, APAG…AFTD, and AAAN…QIQV. Over residues 21 to 40 the composition is skewed to basic residues; sequence QLHHHLSHHHHPALHHHPVL. Residues 41-65 are compositionally biased toward low complexity; sequence QHHYSLQQQHQQQQQQQPPAPPAVA. Residues 108-118 show a composition bias toward basic residues; sequence QQHHHHHHQSH. Positions 119–138 are enriched in low complexity; the sequence is HNNNNHSGGSSGGTSPTHHN. Over residues 166 to 188 the composition is skewed to basic residues; sequence HHLHPQSHPHPHPHPHSHPHPHA. Residues 266-284 are compositionally biased toward acidic residues; that stretch reads ELDDSSDYHEENEDCDSDE. A compositionally biased stretch (gly residues) spans 286-295; the sequence is GSAGGGGGGS. Over residues 297 to 314 the composition is skewed to basic and acidic residues; it reads HMDDHSVCSNGGKDDDGN. Polar residues predominate over residues 315 to 325; the sequence is SIKSGSTSDMS. Positions 331–390 form a DNA-binding region, homeobox; that stretch reads QRKARTAFTDHQLQTLEKSFERQKYLSVQERQELAHKLDLSDCQVKTWYQNRRTKWMRQT. Residues 513–522 show a composition bias toward pro residues; that stretch reads GGPPPPPPPS. Positions 523–534 are enriched in low complexity; that stretch reads SAAAATGGSPSP. Residues 561-576 show a composition bias toward pro residues; that stretch reads ASPPLPLPLARPPSTP.

It belongs to the Antp homeobox family. In terms of tissue distribution, abundant in the eye-antenna imaginal disk.

Its subcellular location is the nucleus. Functionally required in R1 and R6 receptor cells and primary pigment cells for normal eye development. This Drosophila ananassae (Fruit fly) protein is Homeobox protein B-H1 (B-H1).